The primary structure comprises 408 residues: Leucine aminopeptidase 1 (408 aa).

Positions 1–16 are cleaved as a signal peptide; the sequence is MKVSSAIALLLPVVAA. Positions 17–89 are excised as a propeptide; it reads RFVDSAFEQD…SAQSATTGPA (73 aa). N-linked (GlcNAc...) asparagine glycosylation is found at asparagine 95, asparagine 108, and asparagine 182. Residues histidine 190, aspartate 209, glutamate 248, and aspartate 275 each contribute to the Zn(2+) site. Cysteine 324 and cysteine 328 form a disulfide bridge. Histidine 357 is a Zn(2+) binding site.

The protein belongs to the peptidase M28 family. M28E subfamily. Monomer. The cofactor is Zn(2+).

The protein resides in the secreted. Extracellular aminopeptidase that allows assimilation of proteinaceous substrates. This Grosmannia clavigera (strain kw1407 / UAMH 11150) (Blue stain fungus) protein is Leucine aminopeptidase 1 (LAP1).